Here is a 375-residue protein sequence, read N- to C-terminus: Kininogen (375 aa).

An N-terminal signal peptide occupies residues 1 to 23 (MKLGVRLCVLVVFSLQLWGPGQG). Cystatin kininogen-type domains are found at residues 35–139 (CDDK…VEAP) and 156–260 (VESE…GPLD). N-linked (GlcNAc) asparagine glycosylation is present at Asn74. 4 disulfides stabilise this stretch: Cys91-Cys102, Cys115-Cys133, Cys211-Cys223, and Cys234-Cys254. Asn235 carries N-linked (GlcNAc) asparagine glycosylation. A disordered region spans residues 283–375 (EVKTTQASTA…LSDLDLLGKK (93 aa)).

Post-translationally, N-glycosylated, with sialylated biantennary complex-type glycans. O-glycosylated, sialylated oligosaccharides. In terms of processing, bradykinin is released from kininogen by kallikrein. Post-translationally, the N-terminus is blocked. As to expression, expressed in the skin, liver, intestine, spleen, pancreas and kidney.

Its subcellular location is the cytoplasm. The protein resides in the vacuole. Functionally, inhibits papain and ficin (cysteine proteinases) but not trypsin (a serine proteinase). This Salmo salar (Atlantic salmon) protein is Kininogen (LOC106584303).